The chain runs to 302 residues: 4-diphosphocytidyl-2-C-methyl-D-erythritol kinase (302 aa).

Lysine 20 is a catalytic residue. 106–116 is a binding site for ATP; sequence PVASGVGGGSG. Aspartate 148 is a catalytic residue.

It belongs to the GHMP kinase family. IspE subfamily.

It catalyses the reaction 4-CDP-2-C-methyl-D-erythritol + ATP = 4-CDP-2-C-methyl-D-erythritol 2-phosphate + ADP + H(+). Its pathway is isoprenoid biosynthesis; isopentenyl diphosphate biosynthesis via DXP pathway; isopentenyl diphosphate from 1-deoxy-D-xylulose 5-phosphate: step 3/6. Catalyzes the phosphorylation of the position 2 hydroxy group of 4-diphosphocytidyl-2C-methyl-D-erythritol. The chain is 4-diphosphocytidyl-2-C-methyl-D-erythritol kinase from Bartonella henselae (strain ATCC 49882 / DSM 28221 / CCUG 30454 / Houston 1) (Rochalimaea henselae).